Reading from the N-terminus, the 826-residue chain is Dolichyl-diphosphooligosaccharide--protein glycosyltransferase subunit STT3B (826 aa).

Residues 1–60 are disordered; the sequence is MAEPSAPESKHKSSLNSSPWSGLMALGNSRHGHHGPGAQCAHKAAGGVAPPKPAPAGLSG. An N-acetylalanine modification is found at A2. The Cytoplasmic segment spans residues 2–41; sequence AEPSAPESKHKSSLNSSPWSGLMALGNSRHGHHGPGAQCA. S13, S18, and S29 each carry phosphoserine. A helical transmembrane segment spans residues 42 to 86; sequence HKAAGGVAPPKPAPAGLSGGLSQPAGWQSLLSFTILFLAWLAGFS. The Lumenal portion of the chain corresponds to 87–173; the sequence is SRLFAVIRFE…VHIRDVCVFL (87 aa). Residues 101-103 carry the DXD motif 1 motif; sequence EFD. D103 is a Mn(2+) binding site. Residues 174–192 form a helical membrane-spanning segment; sequence APTFSGLTSISTFLLTREL. Residues 193–194 lie on the Cytoplasmic side of the membrane; it reads WN. A helical membrane pass occupies residues 195–212; sequence QGAGLLAACFIAIVPGYI. At 213 to 223 the chain is on the lumenal side; the sequence is SRSVAGSFDNE. 2 residues coordinate Mn(2+): D221 and E223. The DXD motif 2 motif lies at 221-223; that stretch reads DNE. The helical transmembrane segment at 224 to 243 threads the bilayer; that stretch reads GIAIFALQFTYYLWVKSVKT. Topologically, residues 244 to 245 are cytoplasmic; that stretch reads GS. A helical membrane pass occupies residues 246–260; that stretch reads VFWTMCCCLSYFYMV. Residues 261-265 lie on the Lumenal side of the membrane; the sequence is SAWGG. The helical transmembrane segment at 266–282 threads the bilayer; it reads YVFIINLIPLHVFVLLL. Residues 283–287 are Cytoplasmic-facing; the sequence is MQRYS. A helical transmembrane segment spans residues 288–313; sequence KRVYIAYSTFYIVGLILSMQIPFVGF. Topologically, residues 314 to 321 are lumenal; the sequence is QPIRTSEH. The helical transmembrane segment at 322–341 threads the bilayer; sequence MAAAGVFALLQAYAFLQYLR. Topologically, residues 342–350 are cytoplasmic; it reads DRLTKQEFQ. The helical transmembrane segment at 351–371 threads the bilayer; that stretch reads TLFFLGVSLAAGAVFLSVIYL. The Lumenal segment spans residues 372 to 410; sequence TYTGYIAPWSGRFYSLWDTGYAKIHIPIIASVSEHQPTT. The SVSE motif signature appears at 402–405; sequence SVSE. A helical transmembrane segment spans residues 411-433; that stretch reads WVSFFFDLHILVCTFPAGLWFCI. Over 434 to 439 the chain is Cytoplasmic; sequence KNINDE. A helical membrane pass occupies residues 440–456; the sequence is RVFVALYAISAVYFAGV. Topologically, residues 457-460 are lumenal; the sequence is MVRL. R459 serves as a coordination point for dolichyl diphosphooligosaccharide. A helical transmembrane segment spans residues 461-482; the sequence is MLTLTPVVCMLSAIAFSNVFEH. At 483 to 526 the chain is on the cytoplasmic side; sequence YLGDDMKRENPPVEDSSDEDDKRNPGNLYDKAGKVRKHVTEQEK. The tract at residues 490 to 512 is disordered; sequence RENPPVEDSSDEDDKRNPGNLYD. S498 and S499 each carry phosphoserine. Residues 527–552 form a helical membrane-spanning segment; it reads TEEGLGPNIKSIVTMLMLMLLMMFAV. Residues 553–826 are Lumenal-facing; sequence HCTWVTSNAY…KGKKISKKTV (274 aa). The interval 604 to 606 is interacts with target acceptor peptide in protein substrate; it reads WWD. The short motif at 604-608 is the WWDYG motif element; the sequence is WWDYG. Y609 contacts dolichyl diphosphooligosaccharide. N616 and N623 each carry an N-linked (GlcNAc...) asparagine glycan. N-linked (GlcNAc...) (high mannose) asparagine glycosylation is present at N627. N641 is a glycosylation site (N-linked (GlcNAc...) asparagine). Positions 671–678 match the DK motif motif; sequence DINKFLWM.

This sequence belongs to the STT3 family. In terms of assembly, component of the oligosaccharyltransferase (OST) complex. There are 2 OST complexes, OST-A and OST-B, which contain STT3A or STT3B as catalytic subunit, respectively. OST-A and OST-B contain common core subunits RPN1, RPN2, OST48, OST4, DAD1 and TMEM258, and OST-B contains either MAGT1 or TUSC3 as specific accessory subunit. Mg(2+) is required as a cofactor. Requires Mn(2+) as cofactor.

It localises to the endoplasmic reticulum. The protein resides in the endoplasmic reticulum membrane. It catalyses the reaction a di-trans,poly-cis-dolichyl diphosphooligosaccharide + L-asparaginyl-[protein] = N(4)-(oligosaccharide-(1-&gt;4)-N-acetyl-beta-D-glucosaminyl-(1-&gt;4)-N-acetyl-beta-D-glucosaminyl)-L-asparaginyl-[protein] + a di-trans,poly-cis-dolichyl diphosphate + H(+). It participates in protein modification; protein glycosylation. Its function is as follows. Catalytic subunit of the oligosaccharyl transferase (OST) complex that catalyzes the initial transfer of a defined glycan (Glc(3)Man(9)GlcNAc(2) in eukaryotes) from the lipid carrier dolichol-pyrophosphate to an asparagine residue within an Asn-X-Ser/Thr consensus motif in nascent polypeptide chains, the first step in protein N-glycosylation. N-glycosylation occurs cotranslationally and the complex associates with the Sec61 complex at the channel-forming translocon complex that mediates protein translocation across the endoplasmic reticulum (ER). All subunits are required for a maximal enzyme activity. This subunit contains the active site and the acceptor peptide and donor lipid-linked oligosaccharide (LLO) binding pockets. STT3B is present in a small subset of OST complexes and mediates both cotranslational and post-translational N-glycosylation of target proteins: STT3B-containing complexes are required for efficient post-translational glycosylation and while they are less competent than STT3A-containing complexes for cotranslational glycosylation, they have the ability to mediate glycosylation of some nascent sites that are not accessible for STT3A. STT3B-containing complexes also act post-translationally and mediate modification of skipped glycosylation sites in unfolded proteins. Plays a role in ER-associated degradation (ERAD) pathway that mediates ubiquitin-dependent degradation of misfolded endoplasmic reticulum proteins by mediating N-glycosylation of unfolded proteins, which are then recognized by the ERAD pathway and targeted for degradation. The polypeptide is Dolichyl-diphosphooligosaccharide--protein glycosyltransferase subunit STT3B (Canis lupus familiaris (Dog)).